The sequence spans 850 residues: cAMP-inducible prespore protein D7 (850 aa).

The first 24 residues, 1–24, serve as a signal peptide directing secretion; it reads MYSKKYTSFVIVLILSCIISTCTS. The segment covering 119–130 has biased composition (low complexity); that stretch reads QNNNIGSSIGDS. Disordered regions lie at residues 119–167 and 787–850; these read QNNN…SKTT and DAEL…QNQK. A compositionally biased stretch (polar residues) spans 131–143; it reads TGASTSPQFQSIN. The segment covering 144–154 has biased composition (low complexity); the sequence is GLSGASQSSGS. Residues 787 to 798 show a composition bias toward basic and acidic residues; sequence DAELAKNNKQEN. Polar residues predominate over residues 801–820; it reads ENLVQEKQQSPDQIKNQLKN. Over residues 837-850 the composition is skewed to low complexity; it reads EKNQQLLEQEQNQK.

The polypeptide is cAMP-inducible prespore protein D7 (D7) (Dictyostelium discoideum (Social amoeba)).